A 371-amino-acid chain; its full sequence is Chorismate synthase (371 aa).

Residues arginine 48 and arginine 54 each coordinate NADP(+). FMN contacts are provided by residues 132–134 (RSS), 244–245 (NA), glycine 289, 304–308 (KPTSS), and arginine 330.

It belongs to the chorismate synthase family. Homotetramer. It depends on FMNH2 as a cofactor.

The catalysed reaction is 5-O-(1-carboxyvinyl)-3-phosphoshikimate = chorismate + phosphate. Its pathway is metabolic intermediate biosynthesis; chorismate biosynthesis; chorismate from D-erythrose 4-phosphate and phosphoenolpyruvate: step 7/7. Its function is as follows. Catalyzes the anti-1,4-elimination of the C-3 phosphate and the C-6 proR hydrogen from 5-enolpyruvylshikimate-3-phosphate (EPSP) to yield chorismate, which is the branch point compound that serves as the starting substrate for the three terminal pathways of aromatic amino acid biosynthesis. This reaction introduces a second double bond into the aromatic ring system. This chain is Chorismate synthase, found in Methylobacterium nodulans (strain LMG 21967 / CNCM I-2342 / ORS 2060).